The primary structure comprises 265 residues: 4-hydroxy-tetrahydrodipicolinate reductase (265 aa).

9-14 provides a ligand contact to NAD(+); it reads GPRGRM. Residue arginine 37 coordinates NADP(+). NAD(+)-binding positions include 98 to 100 and 124 to 127; these read GTT and APNF. The Proton donor/acceptor role is filled by histidine 154. Histidine 155 provides a ligand contact to (S)-2,3,4,5-tetrahydrodipicolinate. The Proton donor role is filled by lysine 158. 164–165 lines the (S)-2,3,4,5-tetrahydrodipicolinate pocket; that stretch reads GT.

It belongs to the DapB family.

Its subcellular location is the cytoplasm. The enzyme catalyses (S)-2,3,4,5-tetrahydrodipicolinate + NAD(+) + H2O = (2S,4S)-4-hydroxy-2,3,4,5-tetrahydrodipicolinate + NADH + H(+). The catalysed reaction is (S)-2,3,4,5-tetrahydrodipicolinate + NADP(+) + H2O = (2S,4S)-4-hydroxy-2,3,4,5-tetrahydrodipicolinate + NADPH + H(+). The protein operates within amino-acid biosynthesis; L-lysine biosynthesis via DAP pathway; (S)-tetrahydrodipicolinate from L-aspartate: step 4/4. Catalyzes the conversion of 4-hydroxy-tetrahydrodipicolinate (HTPA) to tetrahydrodipicolinate. This is 4-hydroxy-tetrahydrodipicolinate reductase from Geobacillus thermodenitrificans (strain NG80-2).